Reading from the N-terminus, the 275-residue chain is Phosphate import ATP-binding protein PstB 2 (275 aa).

An ABC transporter domain is found at 29 to 270 (LEVKNLNIYY…PSEKKTEDYI (242 aa)). Residue 61–68 (GPSGCGKS) participates in ATP binding.

Belongs to the ABC transporter superfamily. Phosphate importer (TC 3.A.1.7) family. In terms of assembly, the complex is composed of two ATP-binding proteins (PstB), two transmembrane proteins (PstC and PstA) and a solute-binding protein (PstS).

It localises to the cell membrane. It carries out the reaction phosphate(out) + ATP + H2O = ADP + 2 phosphate(in) + H(+). Functionally, part of the ABC transporter complex PstSACB involved in phosphate import. Responsible for energy coupling to the transport system. This is Phosphate import ATP-binding protein PstB 2 from Bacillus licheniformis (strain ATCC 14580 / DSM 13 / JCM 2505 / CCUG 7422 / NBRC 12200 / NCIMB 9375 / NCTC 10341 / NRRL NRS-1264 / Gibson 46).